The chain runs to 499 residues: MLFRSCVGMVSRYSRALLPTITISSRIATIVLPFALTRGRKIHTMSKDEEWWKKIRKSPPVDELMLESVVEVFTDSTKYSKVKPWQTLNQESYGGSGFAIAGKKILTNAHVVEGMNDHIFVHVKRHGSQVKYKAKVQKIAHECDLAILEIDSDEFWKGMNPLEFGDIPPLNEIVYVVGYPKAGETICVTKGVVTGVKTGNYLRSSTKLLTIHIDATTYGGNSGGPVITGDKVLGVLFQILGDKKSTGVVIPTPIIRHFITGAEESSHNAVFGSLVLSCQSMKNAQIRNHFKMSPETTGILINKINSSSGAHKILRKDDIILAIDGVPVLSEMRRISFNHFISMKKPDENILVKVLRKGKEHEYNISLKPVKPHIQVQQYYNLPSYYIFGGFVFVPLTKSYIDDKYYKITDEQHVIISQVMPDDINKGYSNFKDLQVEKVNGVKVKNLKHLRELIEGCFSKDLRLDLENDKVMVLNYESAKKATFEILERHNIKSAWASE.

A mitochondrion-targeting transit peptide spans 1 to 24 (MLFRSCVGMVSRYSRALLPTITIS). Positions 94–259 (GGSGFAIAGK…IPTPIIRHFI (166 aa)) are serine protease. Catalysis depends on charge relay system residues His110, Asp144, and Ser222. The 85-residue stretch at 272 to 356 (GSLVLSCQSM…DENILVKVLR (85 aa)) folds into the PDZ domain.

It belongs to the peptidase S1C family.

The protein resides in the mitochondrion matrix. Its function is as follows. Putative serine protease. The polypeptide is Putative protease Do-like 12, mitochondrial (DEGP12) (Arabidopsis thaliana (Mouse-ear cress)).